A 292-amino-acid polypeptide reads, in one-letter code: uncharacterized protein (292 aa).

5 helical membrane passes run 57–77 (IISLVIFLVGSVLSKHILTLI), 101–121 (VYVFIPIFAGIIAIPVMFNFM), 143–163 (LIYAITFTLRVATCVSFAVLI), 184–204 (VVITITNLAYRYIFLLLNFVL), and 271–291 (IAFLLFSIIITALLVLFDRGI).

Belongs to the CbiQ family.

The protein localises to the cell membrane. This is an uncharacterized protein from Methanocaldococcus jannaschii (strain ATCC 43067 / DSM 2661 / JAL-1 / JCM 10045 / NBRC 100440) (Methanococcus jannaschii).